Here is a 297-residue protein sequence, read N- to C-terminus: Cytosolic Fe-S cluster assembly factor CFD1 (297 aa).

15-22 (GKGGVGKS) lines the ATP pocket. [4Fe-4S] cluster contacts are provided by C216 and C219.

Belongs to the Mrp/NBP35 ATP-binding proteins family. NUBP2/CFD1 subfamily. In terms of assembly, heterotetramer of 2 NBP35 and 2 CFD1 chains. [4Fe-4S] cluster serves as cofactor.

It localises to the cytoplasm. Its function is as follows. Component of the cytosolic iron-sulfur (Fe/S) protein assembly (CIA) machinery. Required for maturation of extramitochondrial Fe-S proteins. The NBP35-CFD1 heterotetramer forms a Fe-S scaffold complex, mediating the de novo assembly of an Fe-S cluster and its transfer to target apoproteins. This Phaeosphaeria nodorum (strain SN15 / ATCC MYA-4574 / FGSC 10173) (Glume blotch fungus) protein is Cytosolic Fe-S cluster assembly factor CFD1.